The chain runs to 115 residues: Large ribosomal subunit protein uL22 (115 aa).

The protein belongs to the universal ribosomal protein uL22 family. In terms of assembly, part of the 50S ribosomal subunit.

In terms of biological role, this protein binds specifically to 23S rRNA; its binding is stimulated by other ribosomal proteins, e.g. L4, L17, and L20. It is important during the early stages of 50S assembly. It makes multiple contacts with different domains of the 23S rRNA in the assembled 50S subunit and ribosome. The globular domain of the protein is located near the polypeptide exit tunnel on the outside of the subunit, while an extended beta-hairpin is found that lines the wall of the exit tunnel in the center of the 70S ribosome. The polypeptide is Large ribosomal subunit protein uL22 (Nitrosospira multiformis (strain ATCC 25196 / NCIMB 11849 / C 71)).